We begin with the raw amino-acid sequence, 153 residues long: Putative tRNA (cytidine(34)-2'-O)-methyltransferase (153 aa).

Residues Gly-102, Ile-122, and Ser-131 each coordinate S-adenosyl-L-methionine.

It belongs to the class IV-like SAM-binding methyltransferase superfamily. RNA methyltransferase TrmH family. TrmL subfamily.

The protein resides in the cytoplasm. It catalyses the reaction cytidine(34) in tRNA + S-adenosyl-L-methionine = 2'-O-methylcytidine(34) in tRNA + S-adenosyl-L-homocysteine + H(+). The enzyme catalyses 5-carboxymethylaminomethyluridine(34) in tRNA(Leu) + S-adenosyl-L-methionine = 5-carboxymethylaminomethyl-2'-O-methyluridine(34) in tRNA(Leu) + S-adenosyl-L-homocysteine + H(+). In terms of biological role, could methylate the ribose at the nucleotide 34 wobble position in tRNA. This chain is Putative tRNA (cytidine(34)-2'-O)-methyltransferase, found in Synechocystis sp. (strain ATCC 27184 / PCC 6803 / Kazusa).